Consider the following 936-residue polypeptide: Aconitate hydratase A (936 aa).

The disordered stretch occupies residues 401–449 (VTPDFDAEGPATENTSAQTAGTPASAADAKGNIPSAAAGAEGRPSNPVT). Positions 412 to 422 (TENTSAQTAGT) are enriched in polar residues. Cys472, Cys538, and Cys541 together coordinate [4Fe-4S] cluster.

The protein belongs to the aconitase/IPM isomerase family. Monomer. [4Fe-4S] cluster serves as cofactor.

The enzyme catalyses citrate = D-threo-isocitrate. The catalysed reaction is (2S,3R)-3-hydroxybutane-1,2,3-tricarboxylate = 2-methyl-cis-aconitate + H2O. It functions in the pathway carbohydrate metabolism; tricarboxylic acid cycle; isocitrate from oxaloacetate: step 2/2. The protein operates within organic acid metabolism; propanoate degradation. Involved in the catabolism of short chain fatty acids (SCFA) via the tricarboxylic acid (TCA)(acetyl degradation route) and probably via the 2-methylcitrate cycle I (propionate degradation route). Catalyzes the reversible isomerization of citrate to isocitrate via cis-aconitate. Could catalyze the hydration of 2-methyl-cis-aconitate to yield (2R,3S)-2-methylisocitrate. The apo form of AcnA functions as a RNA-binding regulatory protein. The polypeptide is Aconitate hydratase A (acn) (Corynebacterium jeikeium (strain K411)).